A 379-amino-acid polypeptide reads, in one-letter code: Guanine nucleotide-binding protein G(s) subunit alpha (379 aa).

In terms of domain architecture, G-alpha spans 38-379; sequence STHRLLLLGA…RMHLRQYELL (342 aa). The tract at residues 41–54 is G1 motif; the sequence is RLLLLGAGESGKST. Residues 46–53, 182–188, 207–211, 276–279, and Ala351 each bind GTP; these read GAGESGKS, LRCRVLT, DVGGQ, and NKQD. Mg(2+) contacts are provided by Ser53 and Thr188. The segment at 180-188 is G2 motif; it reads DILRCRVLT. Residues 203–212 are G3 motif; the sequence is FHMFDVGGQR. Residues 272–279 are G4 motif; sequence ILFLNKQD. Positions 349-354 are G5 motif; it reads TCAVDT.

It belongs to the G-alpha family. G(s) subfamily. In terms of assembly, g proteins are composed of 3 units; alpha, beta and gamma. The alpha chain contains the guanine nucleotide binding site.

Guanine nucleotide-binding proteins (G proteins) are involved as modulators or transducers in various transmembrane signaling systems. The G(s) protein is involved in hormonal regulation of adenylate cyclase: it activates the cyclase in response to beta-adrenergic stimuli. The protein is Guanine nucleotide-binding protein G(s) subunit alpha of Schistosoma mansoni (Blood fluke).